We begin with the raw amino-acid sequence, 176 residues long: Nucleoside triphosphate/diphosphate phosphatase (176 aa).

Catalysis depends on arginine 23, which acts as the Proton donor. Mg(2+) is bound by residues asparagine 87, aspartate 103, aspartate 105, aspartate 107, aspartate 120, and glutamate 123.

It belongs to the Ntdp family. The cofactor is Mg(2+).

The enzyme catalyses a ribonucleoside 5'-triphosphate + H2O = a ribonucleoside 5'-diphosphate + phosphate + H(+). The catalysed reaction is a ribonucleoside 5'-diphosphate + H2O = a ribonucleoside 5'-phosphate + phosphate + H(+). In terms of biological role, has nucleoside phosphatase activity towards nucleoside triphosphates and nucleoside diphosphates. This is Nucleoside triphosphate/diphosphate phosphatase from Lactococcus lactis subsp. cremoris (strain MG1363).